The sequence spans 72 residues: Exodeoxyribonuclease 7 small subunit (72 aa).

Belongs to the XseB family. In terms of assembly, heterooligomer composed of large and small subunits.

The protein resides in the cytoplasm. It catalyses the reaction Exonucleolytic cleavage in either 5'- to 3'- or 3'- to 5'-direction to yield nucleoside 5'-phosphates.. Its function is as follows. Bidirectionally degrades single-stranded DNA into large acid-insoluble oligonucleotides, which are then degraded further into small acid-soluble oligonucleotides. The polypeptide is Exodeoxyribonuclease 7 small subunit (Ruegeria pomeroyi (strain ATCC 700808 / DSM 15171 / DSS-3) (Silicibacter pomeroyi)).